We begin with the raw amino-acid sequence, 440 residues long: Tryptophan synthase beta chain (440 aa).

Lysine 110 is subject to N6-(pyridoxal phosphate)lysine.

This sequence belongs to the TrpB family. In terms of assembly, tetramer of two alpha and two beta chains. It depends on pyridoxal 5'-phosphate as a cofactor.

It catalyses the reaction (1S,2R)-1-C-(indol-3-yl)glycerol 3-phosphate + L-serine = D-glyceraldehyde 3-phosphate + L-tryptophan + H2O. It functions in the pathway amino-acid biosynthesis; L-tryptophan biosynthesis; L-tryptophan from chorismate: step 5/5. The beta subunit is responsible for the synthesis of L-tryptophan from indole and L-serine. The polypeptide is Tryptophan synthase beta chain (Thermococcus gammatolerans (strain DSM 15229 / JCM 11827 / EJ3)).